The following is a 77-amino-acid chain: U8-lycotoxin-Ls1u (77 aa).

The first 20 residues, 1–20 (MKLIIFTGLVLFAIVSLIEA), serve as a signal peptide directing secretion. Residues 21–26 (QAENEK) constitute a propeptide that is removed on maturation.

Belongs to the neurotoxin 19 (CSTX) family. 08 (U8-Lctx) subfamily. Post-translationally, contains 4 disulfide bonds. In terms of tissue distribution, expressed by the venom gland.

Its subcellular location is the secreted. The polypeptide is U8-lycotoxin-Ls1u (Lycosa singoriensis (Wolf spider)).